The chain runs to 307 residues: MYSMLDTDMKSPVQQSNALSGGPGTPGGKGNTSTPDQDRVKRPMNAFMVWSRGQRRKMAQENPKMHNSEISKRLGADWKLLSDSEKRPFIDEAKRLRAVHMKDYPDYKYRPRRKTKTLLKKDKYSLPGNLLAPGINPVSGGVGQRIDTYPHMNGWTNGAYSLMQEQLGYGQHPAMNSSQMQQIQHRYDMGGLQYSPMMSSAQTYMNAAASTYSMSPAYNQQSSTVMSLASMGSVVKSEPSSPPPAITSHTQRACLGDLRDMISMYLPPGGDAGDHSSLQNSRLHSVHQHYQSAGGPGVNGTVPLTHI.

The segment at methionine 1–proline 43 is disordered. Residues glycine 21–glycine 30 are compositionally biased toward gly residues. The HMG box DNA-binding region spans valine 40 to lysine 108. The short motif at aspartate 257–proline 268 is the 9aaTAD element.

As to quaternary structure, interacts with ctnnb1.

The protein localises to the nucleus. It is found in the cytoplasm. In terms of biological role, transcription factor with sequence-specific DNA binding activity. Binds to the consensus sequence 5'-[AT][AT]CAA[AT]G-3', showing a preference for 5'-AACAAT-3' and 5'-AACAAAG-3'. Inhibits beta-catenin-mediated dorsal axis specification by binding to sites within the promoter of the beta-catenin-regulated gene nodal5. Acts maternally as a transcriptional repressor of nodal5 and nodal6 to restrict their expression to the vegetal hemisphere of early embryos and thus establish germ layer formation. Acts at multiple points to inhibit nodal signaling, repressing the expression of the other mesoderm-inducing nodal genes nodal, nodal2 and nodal4, and also acting downstream to induce expression of genes including trim33/ectodermin, ema and coco, whose products repress nodal signaling. The polypeptide is Transcription factor Sox-3-B (sox3-b) (Xenopus laevis (African clawed frog)).